The following is an 858-amino-acid chain: Taste receptor type 1 member 3 (858 aa).

The N-terminal stretch at 1 to 20 (MPALAIMGLSLAAFLELGMG) is a signal peptide. The Extracellular portion of the chain corresponds to 21 to 572 (ASLCLSQQFK…RPKFLAWGEP (552 aa)). A glycan (N-linked (GlcNAc...) asparagine; when associated with variant T-60) is linked at Asn-58. N-linked (GlcNAc...) asparagine glycosylation is found at Asn-85, Asn-130, Asn-203, Asn-264, Asn-379, Asn-387, Asn-418, Asn-439, and Asn-482. A helical transmembrane segment spans residues 573–593 (VVLSLLLLLCLVLGLALAALG). Residues 594-610 (LSVHHWDSPLVQASGGS) are Cytoplasmic-facing. A helical membrane pass occupies residues 611–631 (QFCFGLICLGLFCLSVLLFPG). Topologically, residues 632–644 (RPSSASCLAQQPM) are extracellular. Residues 645–665 (AHLPLTGCLSTLFLQAAETFV) traverse the membrane as a helical segment. Over 666–687 (ESELPLSWANWLCSYLRGLWAW) the chain is Cytoplasmic. Residues 688–708 (LVVLLATFVEAALCAWYLIAF) form a helical membrane-spanning segment. Over 709 to 735 (PPEVVTDWSVLPTEVLEHCHVRSWVSL) the chain is Extracellular. The chain crosses the membrane as a helical span at residues 736–756 (GLVHITNAMLAFLCFLGTFLV). Topologically, residues 757–767 (QSQPGRYNRAR) are cytoplasmic. The helical transmembrane segment at 768–788 (GLTFAMLAYFITWVSFVPLLA) threads the bilayer. Residues 789-796 (NVQVAYQP) lie on the Extracellular side of the membrane. The helical transmembrane segment at 797–817 (AVQMGAILVCALGILVTFHLP) threads the bilayer. Over 818–858 (KCYVLLWLPKLNTQEFFLGRNAKKAADENSGGGEAAQGHNE) the chain is Cytoplasmic.

Belongs to the G-protein coupled receptor 3 family. TAS1R subfamily. As to quaternary structure, forms homodimers or heterodimers with TAS1R1 and TAS1R2. The Thr-60 variant is predicted to introduce a novel N-linked glycosylation site at Asn-58. The addition of even a short carbohydrate group at Asn-58 is predicted to disrupt one of the contact surfaces required for stability of a dimer. Therefore a Thr-60 variant N-glycosylated at Asn-58 is predicted to be precluded from forming homodimers or heterodimers. As to expression, expressed in circumvallate, foliate and fungiform taste papillae as well as in taste buds on the palate. Also expressed in testis. Not expressed in brain, heart, kidney, liver or spleen. The topographic distribution in various taste papillae is different from those of other T1R members.

The protein localises to the cell membrane. Putative taste receptor. TAS1R1/TAS1R3 responds to the umami taste stimulus (the taste of monosodium glutamate) and also to most of the 20 standard L-amino acids, but not to their D-enantiomers or other compounds. TAS1R2/TAS1R3 recognizes diverse natural and synthetic sweeteners. TAS1R3 is essential for the recognition and response to the disaccharide trehalose. Sequence differences within and between species can significantly influence the selectivity and specificity of taste responses. The polypeptide is Taste receptor type 1 member 3 (Tas1r3) (Mus musculus (Mouse)).